A 255-amino-acid polypeptide reads, in one-letter code: 5'-nucleotidase SurE (255 aa).

Residues D8, D9, S39, and N91 each coordinate a divalent metal cation.

The protein belongs to the SurE nucleotidase family. A divalent metal cation serves as cofactor.

Its subcellular location is the cytoplasm. It carries out the reaction a ribonucleoside 5'-phosphate + H2O = a ribonucleoside + phosphate. Functionally, nucleotidase that shows phosphatase activity on nucleoside 5'-monophosphates. This Acinetobacter baylyi (strain ATCC 33305 / BD413 / ADP1) protein is 5'-nucleotidase SurE.